Consider the following 306-residue polypeptide: Lipoyl synthase (306 aa).

Cysteine 52, cysteine 57, cysteine 63, cysteine 78, cysteine 82, cysteine 85, and serine 289 together coordinate [4Fe-4S] cluster. In terms of domain architecture, Radical SAM core spans 64–278 (WNRKTATYML…KETAYKIGFK (215 aa)).

It belongs to the radical SAM superfamily. Lipoyl synthase family. The cofactor is [4Fe-4S] cluster.

It localises to the cytoplasm. The enzyme catalyses [[Fe-S] cluster scaffold protein carrying a second [4Fe-4S](2+) cluster] + N(6)-octanoyl-L-lysyl-[protein] + 2 oxidized [2Fe-2S]-[ferredoxin] + 2 S-adenosyl-L-methionine + 4 H(+) = [[Fe-S] cluster scaffold protein] + N(6)-[(R)-dihydrolipoyl]-L-lysyl-[protein] + 4 Fe(3+) + 2 hydrogen sulfide + 2 5'-deoxyadenosine + 2 L-methionine + 2 reduced [2Fe-2S]-[ferredoxin]. It participates in protein modification; protein lipoylation via endogenous pathway; protein N(6)-(lipoyl)lysine from octanoyl-[acyl-carrier-protein]: step 2/2. Catalyzes the radical-mediated insertion of two sulfur atoms into the C-6 and C-8 positions of the octanoyl moiety bound to the lipoyl domains of lipoate-dependent enzymes, thereby converting the octanoylated domains into lipoylated derivatives. This chain is Lipoyl synthase, found in Leptospira biflexa serovar Patoc (strain Patoc 1 / Ames).